The sequence spans 384 residues: Succinyl-diaminopimelate desuccinylase (384 aa).

His71 lines the Zn(2+) pocket. Asp73 is an active-site residue. Asp104 contributes to the Zn(2+) binding site. Catalysis depends on Glu139, which acts as the Proton acceptor. Zn(2+) is bound by residues Glu140, Glu168, and His357.

Belongs to the peptidase M20A family. DapE subfamily. Homodimer. Zn(2+) is required as a cofactor. It depends on Co(2+) as a cofactor.

The catalysed reaction is N-succinyl-(2S,6S)-2,6-diaminopimelate + H2O = (2S,6S)-2,6-diaminopimelate + succinate. Its pathway is amino-acid biosynthesis; L-lysine biosynthesis via DAP pathway; LL-2,6-diaminopimelate from (S)-tetrahydrodipicolinate (succinylase route): step 3/3. In terms of biological role, catalyzes the hydrolysis of N-succinyl-L,L-diaminopimelic acid (SDAP), forming succinate and LL-2,6-diaminopimelate (DAP), an intermediate involved in the bacterial biosynthesis of lysine and meso-diaminopimelic acid, an essential component of bacterial cell walls. The polypeptide is Succinyl-diaminopimelate desuccinylase (Bradyrhizobium sp. (strain ORS 278)).